The primary structure comprises 1046 residues: Piwi-like protein 2 (1046 aa).

Pro residues predominate over residues 1–12 (MDPKRPTFPSPP). The tract at residues 1–35 (MDPKRPTFPSPPGVIRAPWQQSTEDQSQLLDQPSL) is disordered. The span at 19-31 (WQQSTEDQSQLLD) shows a compositional bias: polar residues. The PAZ domain occupies 462–575 (SVLDVMNLIY…LLPELSFMTG (114 aa)). Residues 741 to 1032 (LVVCIMTGNR…LAFLSGQYLH (292 aa)) form the Piwi domain. Catalysis depends on residues Asp-818, Glu-856, Asp-888, and His-1021.

This sequence belongs to the argonaute family. Piwi subfamily. In terms of assembly, component of the PET complex. Requires Mg(2+) as cofactor. In terms of processing, methylated on arginine residues; required for the interaction with Tudor domain-containing protein and subsequent localization to the meiotic nuage, also named P granule. Detected in primordial germ cells (PGCs) from 3 dpf. In adult, it is found in both the female and male gonad. In the ovary, it is present in all stages of germ cell differentiation. In testis, it is present in mitotic and meiotic germ cells. No protein has been detected in the fully differentiated sperm cell.

It localises to the cytoplasm. The protein localises to the nucleus. Endoribonuclease that plays a central role during spermatogenesis by repressing transposable elements and preventing their mobilization, which is essential for the germline integrity. Plays an essential role in germ cell differentiation and meiosis, independently of the function in transposable elements repression. Acts via the piRNA metabolic process, which mediates the repression of transposable elements during meiosis by forming complexes composed of piRNAs and Piwi proteins and govern the methylation and subsequent repression of transposons. During piRNA biosynthesis, plays a key role in the piRNA amplification loop, also named ping-pong amplification cycle, by acting as a 'slicer-competent' piRNA endoribonuclease that cleaves primary piRNAs, which are then loaded onto 'slicer-incompetent' piwil4. Piwil2 slicing produces a pre-miRNA intermediate, which is then processed in mature piRNAs, and as well as a 16 nucleotide by-product that is degraded. Required for piwil4/miwi2 nuclear localization and association with secondary piRNAs antisense. Represses circadian rhythms by promoting the stability and activity of core clock components BMAL1 and CLOCK. The sequence is that of Piwi-like protein 2 (piwil2) from Danio rerio (Zebrafish).